Consider the following 122-residue polypeptide: Holo-[acyl-carrier-protein] synthase (122 aa).

Residues D8 and E58 each contribute to the Mg(2+) site.

This sequence belongs to the P-Pant transferase superfamily. AcpS family. The cofactor is Mg(2+).

The protein localises to the cytoplasm. It catalyses the reaction apo-[ACP] + CoA = holo-[ACP] + adenosine 3',5'-bisphosphate + H(+). In terms of biological role, transfers the 4'-phosphopantetheine moiety from coenzyme A to a Ser of acyl-carrier-protein. In Levilactobacillus brevis (strain ATCC 367 / BCRC 12310 / CIP 105137 / JCM 1170 / LMG 11437 / NCIMB 947 / NCTC 947) (Lactobacillus brevis), this protein is Holo-[acyl-carrier-protein] synthase.